The chain runs to 244 residues: Sortase B (244 aa).

At 1–6 (MRMKRF) the chain is on the cytoplasmic side. The chain crosses the membrane as a helical span at residues 7–24 (LTIVQILLVVIIIIFGYK). Over 25–244 (IVQTYIEDKQ…VVVAKIIKVS (220 aa)) the chain is Extracellular. Cys223 (acyl-thioester intermediate) is an active-site residue.

This sequence belongs to the bacterial sortase family. Class B subfamily.

It localises to the cell membrane. It carries out the reaction The enzyme catalyzes a cell wall sorting reaction in which a surface protein with a sorting signal containing a NPXTN motif is cleaved between the Thr and Asn residue. The resulting threonine carboxyl end of the protein is covalently attached to a pentaglycine cross-bridge of peptidoglycan.. Inhibited by MTSET (2-(Trimethylammonium)-ethyl-methanethiosulfonate) and E64 ([n- (l-3-trans-carboxyoxirane-2-carbonyl)-l-leucyl]-amido(4-guanido)butane). Inhibited by coptisine. Its function is as follows. Transpeptidase that anchors surface proteins to the cell wall. Recognizes and modifies its substrate by proteolytic cleavage of a C-terminal sorting signal. Following cleavage, a covalent intermediate is formed via a thioester bond between the sortase and its substrate, which is then transferred and covalently attached to the cell wall. This sortase recognizes an Asn-Pro-Gln-Thr-Asn (NPQTN) motif in IsdC, which is cleaved by the sortase between the threonine and aspargine residues; may only have 1 substrate in this bacterium. May be dedicated to the process of iron acquisition during bacterial infection. This chain is Sortase B, found in Staphylococcus aureus (strain NCTC 8325 / PS 47).